A 329-amino-acid chain; its full sequence is Vitamin B12 import system permease protein BtuC (329 aa).

9 helical membrane passes run 22–42 (LSVL…QWIA), 64–84 (LAVL…QALF), 91–111 (PGLL…VLLG), 115–135 (LPGW…TLIL), 149–169 (LLAG…AIYF), 187–207 (GGVD…SLWI), 243–263 (GWMV…GLVI), 277–297 (ALLP…DVIA), and 305–325 (ELPI…WLLL).

The protein belongs to the binding-protein-dependent transport system permease family. FecCD subfamily. In terms of assembly, the complex is composed of two ATP-binding proteins (BtuD), two transmembrane proteins (BtuC) and a solute-binding protein (BtuF).

The protein localises to the cell inner membrane. Part of the ABC transporter complex BtuCDF involved in vitamin B12 import. Involved in the translocation of the substrate across the membrane. The sequence is that of Vitamin B12 import system permease protein BtuC from Citrobacter koseri (strain ATCC BAA-895 / CDC 4225-83 / SGSC4696).